The primary structure comprises 450 residues: Glutamyl-tRNA reductase (450 aa).

Residues Thr-45–Arg-48, Ser-107, Glu-112–Glu-114, and Gln-118 each bind substrate. The Nucleophile role is filled by Cys-46. Gly-196–Ala-201 contacts NADP(+).

It belongs to the glutamyl-tRNA reductase family. In terms of assembly, homodimer.

The catalysed reaction is (S)-4-amino-5-oxopentanoate + tRNA(Glu) + NADP(+) = L-glutamyl-tRNA(Glu) + NADPH + H(+). It participates in porphyrin-containing compound metabolism; protoporphyrin-IX biosynthesis; 5-aminolevulinate from L-glutamyl-tRNA(Glu): step 1/2. Catalyzes the NADPH-dependent reduction of glutamyl-tRNA(Glu) to glutamate 1-semialdehyde (GSA). This is Glutamyl-tRNA reductase from Micrococcus luteus (strain ATCC 4698 / DSM 20030 / JCM 1464 / CCM 169 / CCUG 5858 / IAM 1056 / NBRC 3333 / NCIMB 9278 / NCTC 2665 / VKM Ac-2230) (Micrococcus lysodeikticus).